The following is a 246-amino-acid chain: Proteasome subunit alpha type-6 (246 aa).

The protein belongs to the peptidase T1A family. In terms of assembly, the 26S proteasome consists of a 20S proteasome core and two 19S regulatory subunits. The 20S proteasome core is composed of 28 subunits that are arranged in four stacked rings, resulting in a barrel-shaped structure. The two end rings are each formed by seven alpha subunits, and the two central rings are each formed by seven beta subunits. The catalytic chamber with the active sites is on the inside of the barrel.

It is found in the cytoplasm. Its subcellular location is the nucleus. Functionally, the proteasome is a multicatalytic proteinase complex which is characterized by its ability to cleave peptides with Arg, Phe, Tyr, Leu, and Glu adjacent to the leaving group at neutral or slightly basic pH. The proteasome has an ATP-dependent proteolytic activity. This Caenorhabditis elegans protein is Proteasome subunit alpha type-6 (pas-1).